Reading from the N-terminus, the 419-residue chain is L-rhamnose isomerase (419 aa).

Mn(2+) contacts are provided by His262, Asp294, and Asp296.

The protein belongs to the rhamnose isomerase family. As to quaternary structure, homotetramer. The cofactor is Mn(2+).

The protein resides in the cytoplasm. The enzyme catalyses L-rhamnopyranose = L-rhamnulose. It participates in carbohydrate degradation; L-rhamnose degradation; glycerone phosphate from L-rhamnose: step 1/3. Catalyzes the interconversion of L-rhamnose and L-rhamnulose. The sequence is that of L-rhamnose isomerase from Salmonella newport (strain SL254).